The following is a 299-amino-acid chain: Single myb histone 1 (299 aa).

One can recognise an HTH myb-type domain in the interval methionine 1–glycine 61. The H-T-H motif DNA-binding region spans tryptophan 28 to serine 57. An H15 domain is found at serine 124–proline 192. A coiled-coil region spans residues glutamate 238–leucine 279.

It belongs to the histone H1/H5 family. SMH subfamily. Forms a homodimer and heterodimers. In terms of tissue distribution, expressed in leaves.

The protein localises to the nucleus. The protein resides in the chromosome. It is found in the nucleolus. Its subcellular location is the telomere. In terms of biological role, binds preferentially double-stranded telomeric repeats 5'-TTTAGGG-3', but can also bind to the single G-rich and C-rich telomeric strand. The protein is Single myb histone 1 (SMH1) of Zea mays (Maize).